A 465-amino-acid chain; its full sequence is Cysteine--tRNA ligase (465 aa).

A Zn(2+)-binding site is contributed by Cys29. A 'HIGH' region motif is present at residues 31 to 41; that stretch reads PTVYNYIHIGN. Zn(2+) contacts are provided by Cys209, His234, and Glu238. Positions 266–270 match the 'KMSKS' region motif; it reads KMSKS. Residue Lys269 participates in ATP binding. Ser270 bears the Phosphoserine mark.

It belongs to the class-I aminoacyl-tRNA synthetase family. Monomer. The cofactor is Zn(2+).

The protein resides in the cytoplasm. The catalysed reaction is tRNA(Cys) + L-cysteine + ATP = L-cysteinyl-tRNA(Cys) + AMP + diphosphate. The chain is Cysteine--tRNA ligase from Bacillus cereus (strain ATCC 10987 / NRS 248).